The primary structure comprises 542 residues: NAD-dependent deacetylase sir2D (542 aa).

Disordered stretches follow at residues 1–37 and 136–160; these read MNKR…NTPL and ETST…TTTT. Residues 8-25 show a composition bias toward low complexity; it reads NNELNEIQNNQNKNNNNK. Positions 165 to 193 form a coiled coil; sequence NETILLDILNNNKDEVDDEIQRIGNNVGN. The Deacetylase sirtuin-type domain maps to 283 to 542; that stretch reads ATLDLSTFEK…VQDLLNKVKW (260 aa). Catalysis depends on His-411, which acts as the Proton acceptor. Zn(2+) is bound by residues Cys-419, Cys-422, Cys-443, and Cys-446.

It belongs to the sirtuin family. Zn(2+) is required as a cofactor.

The enzyme catalyses N(6)-acetyl-L-lysyl-[protein] + NAD(+) + H2O = 2''-O-acetyl-ADP-D-ribose + nicotinamide + L-lysyl-[protein]. Functionally, NAD-dependent deacetylase, which plays an important role in the regulation of transcriptional repression. In Dictyostelium discoideum (Social amoeba), this protein is NAD-dependent deacetylase sir2D (sir2D).